Reading from the N-terminus, the 724-residue chain is Outer spore wall protein 2 (724 aa).

Disordered stretches follow at residues 407–427 and 477–497; these read NSGQ…KNRV and TSGG…YDDK.

Its subcellular location is the cytoplasm. It is found in the prospore membrane. Functionally, may be involved in a late step of spore wall assembly. The polypeptide is Outer spore wall protein 2 (OSW2) (Saccharomyces cerevisiae (strain ATCC 204508 / S288c) (Baker's yeast)).